The sequence spans 313 residues: uncharacterized protein (313 aa).

6 consecutive transmembrane segments (helical) span residues 16–36 (AGTW…AFLA), 106–126 (FTIL…ANEF), 155–175 (FGLL…LIFF), 208–228 (LSES…SAVF), 233–253 (LAVG…AFIA), and 286–306 (FSLV…FGIF).

Its subcellular location is the cell membrane. This is an uncharacterized protein from Bacillus subtilis (strain 168).